The following is a 154-amino-acid chain: uncharacterized protein (154 aa).

2 coiled-coil regions span residues 8 to 48 (DEEV…AIEA) and 89 to 138 (VQEL…RGLV).

This is an uncharacterized protein from Treponema pallidum (strain Nichols).